Reading from the N-terminus, the 896-residue chain is Valine--tRNA ligase (896 aa).

Residues 48–58 carry the 'HIGH' region motif; it reads PNVTGSLHMGH. The 'KMSKS' region signature appears at 543 to 547; the sequence is KMSKS. Lys-546 contributes to the ATP binding site. Positions 830–896 form a coiled coil; the sequence is VIDLDAERTR…ARLGAALERL (67 aa).

The protein belongs to the class-I aminoacyl-tRNA synthetase family. ValS type 1 subfamily. As to quaternary structure, monomer.

The protein resides in the cytoplasm. The enzyme catalyses tRNA(Val) + L-valine + ATP = L-valyl-tRNA(Val) + AMP + diphosphate. Its function is as follows. Catalyzes the attachment of valine to tRNA(Val). As ValRS can inadvertently accommodate and process structurally similar amino acids such as threonine, to avoid such errors, it has a 'posttransfer' editing activity that hydrolyzes mischarged Thr-tRNA(Val) in a tRNA-dependent manner. The chain is Valine--tRNA ligase from Granulibacter bethesdensis (strain ATCC BAA-1260 / CGDNIH1).